The following is a 132-amino-acid chain: NADPH-dependent 7-cyano-7-deazaguanine reductase (132 aa).

The Thioimide intermediate role is filled by C43. The active-site Proton donor is D50. Substrate is bound by residues V65 to L67 and H84 to E85.

It belongs to the GTP cyclohydrolase I family. QueF type 1 subfamily.

It localises to the cytoplasm. It carries out the reaction 7-aminomethyl-7-carbaguanine + 2 NADP(+) = 7-cyano-7-deazaguanine + 2 NADPH + 3 H(+). It functions in the pathway tRNA modification; tRNA-queuosine biosynthesis. In terms of biological role, catalyzes the NADPH-dependent reduction of 7-cyano-7-deazaguanine (preQ0) to 7-aminomethyl-7-deazaguanine (preQ1). In Thermosynechococcus vestitus (strain NIES-2133 / IAM M-273 / BP-1), this protein is NADPH-dependent 7-cyano-7-deazaguanine reductase.